A 154-amino-acid chain; its full sequence is 6,7-dimethyl-8-ribityllumazine synthase (154 aa).

5-amino-6-(D-ribitylamino)uracil contacts are provided by residues phenylalanine 21, 55–57 (AFE), and 79–81 (CVI). 84–85 (AT) serves as a coordination point for (2S)-2-hydroxy-3-oxobutyl phosphate. Histidine 87 acts as the Proton donor in catalysis. Residue phenylalanine 112 participates in 5-amino-6-(D-ribitylamino)uracil binding. Arginine 126 is a (2S)-2-hydroxy-3-oxobutyl phosphate binding site.

It belongs to the DMRL synthase family. In terms of assembly, forms an icosahedral capsid composed of 60 subunits, arranged as a dodecamer of pentamers.

The catalysed reaction is (2S)-2-hydroxy-3-oxobutyl phosphate + 5-amino-6-(D-ribitylamino)uracil = 6,7-dimethyl-8-(1-D-ribityl)lumazine + phosphate + 2 H2O + H(+). It functions in the pathway cofactor biosynthesis; riboflavin biosynthesis; riboflavin from 2-hydroxy-3-oxobutyl phosphate and 5-amino-6-(D-ribitylamino)uracil: step 1/2. Functionally, catalyzes the formation of 6,7-dimethyl-8-ribityllumazine by condensation of 5-amino-6-(D-ribitylamino)uracil with 3,4-dihydroxy-2-butanone 4-phosphate. This is the penultimate step in the biosynthesis of riboflavin. The protein is 6,7-dimethyl-8-ribityllumazine synthase of Staphylococcus aureus (strain MRSA252).